Reading from the N-terminus, the 216-residue chain is Protein Syd (216 aa).

The protein belongs to the Syd family.

It localises to the cell inner membrane. Interacts with the SecY protein in vivo. May bind preferentially to an uncomplexed state of SecY, thus functioning either as a chelating agent for excess SecY in the cell or as a regulatory factor that negatively controls the translocase function. The polypeptide is Protein Syd (Shewanella baltica (strain OS185)).